The chain runs to 148 residues: Caltractin (148 aa).

EF-hand domains lie at 4-39, 40-75, 77-112, and 113-148; these read EQKQDIREAFDLFDTDGSGTIDAKELKVAMRALGFE, PKKEEIKKMIADIDKDGSGTIDFEEFLQMMTAKMGE, DSREEIMKAFRLFDDDETGKISFKNLKRVAKELGEN, and MTDEELQEMIDEADRDGDGEVNEEEFFRIMKKTSLF. Residues Asp17, Asp19, Ser21, Thr23, Glu28, Asp53, Asp55, Ser57, Thr59, and Glu64 each coordinate Ca(2+). Residues Asp126, Asp128, Asp130, Glu132, and Glu137 each coordinate Ca(2+).

Belongs to the centrin family. Ubiquitous.

In terms of biological role, this calcium-binding protein is found in the basal body complexes (the functional homolog of the centrosome in animal cell). In mitotic cells it is specifically associated with the poles of the mitotic spindles at the sites of the duplicated basal body complexes. The polypeptide is Caltractin (Tetraselmis striata (Green microalga)).